The sequence spans 518 residues: Fusicoccin H C-9 hydroxylase (518 aa).

A helical transmembrane segment spans residues 12-29; that stretch reads HLLLISTVIAVLAALIVS. Asn-81 and Asn-168 each carry an N-linked (GlcNAc...) asparagine glycan. Cys-456 provides a ligand contact to heme.

It belongs to the cytochrome P450 family. The cofactor is heme.

Its subcellular location is the membrane. It participates in mycotoxin biosynthesis. In terms of biological role, cytochrome P450 monooxygenase; part of the 2 gene clusters that mediate the biosynthesis of fusicoccins, diterpene glucosides that display phytohormone-like activity and function as potent activators of plasma membrane H(+)-ATPases in plants by modifying 14-3-3 proteins and cause the plant disease constriction canker. The first step in the pathway is performed by the fusicoccadiene synthase PaFS that possesses both prenyl transferase and terpene cyclase activity, converting isopentenyl diphosphate and dimethylallyl diphosphate into geranylgeranyl diphosphate (GGDP) and successively converting GGDP into fusicocca-2,10(14)-diene, a precursor for fusicoccin H. The second step is the oxidation at the C-8 position by the cytochrome P450 monooxygenase PaP450-2 to yield fusicocca-2,10(14)-diene-8-beta-ol. The cytochrome P450 monooxygenase PaP450-1 then catalyzes the hydroxylation at the C-16 position to produce fusicocca-2,10(14)-diene-8-beta,16-diol. The dioxygenase fc-dox then catalyzes the 16-oxydation of fusicocca-2,10(14)-diene-8-beta,16-diol to yield an aldehyde (8-beta-hydroxyfusicocca-1,10(14)-dien-16-al). The short-chain dehydrogenase/reductase fc-sdr catalyzes the reduction of the aldehyde to yield fusicocca-1,10(14)-diene-8-beta,16-diol. The next step is the hydroxylation at C-9 performed by the cytochrome P450 monooxygenase PaP450-3 that leads to fusicoccin H aglycon which is glycosylated to fusicoccin H by the O-glycosyltransferase PaGT. Hydroxylation at C-12 by the cytochrome P450 monooxygenase PaP450-4 leads then to the production of fusicoccin Q and is followed by methylation by the O-methyltransferase PaMT to yield fusicoccin P. Fusicoccin P is further converted to fusicoccin J via prenylation by the O-glucose prenyltransferase PaPT. Cytochrome P450 monooxygenase PaP450-5 then performs hydroxylation at C-19 to yield dideacetyl-fusicoccin A which is acetylated to 3'-O-deacetyl-fusicoccin A by the O-acetyltransferase PaAT-2. Finally, a another acetylation by the O-acetyltransferase PaAT-1 yields fusicoccin A. The sequence is that of Fusicoccin H C-9 hydroxylase from Phomopsis amygdali (Fusicoccum amygdali).